The chain runs to 154 residues: UPF0178 protein Gbem_2221 (154 aa).

Belongs to the UPF0178 family.

This is UPF0178 protein Gbem_2221 from Citrifermentans bemidjiense (strain ATCC BAA-1014 / DSM 16622 / JCM 12645 / Bem) (Geobacter bemidjiensis).